Here is a 292-residue protein sequence, read N- to C-terminus: MTTTRYRPTWDLALDPLVSCKLCLGEYPVEQMTTIAQCQCIFCTLCLKQYVELLIKEGLETAISCPDAACPKQGHLQENEIECMVAAEIMQRYKKLQFEREVLFDPCRTWCPASTCQAVCQLQDVGLQTPQPVQCKACRMEFCSTCKASWHPGQGCPETMPITFLPGETSAAFKMEEDDAPIKRCPKCKVYIERDEGCAQMMCKNCKHAFCWYCLESLDDDFLLIHYDKGPCRNKLGHSRASVIWHRTQVVGIFAGFGLLLLVASPFLLLATPFVLCCKCKCSKGDDDPLPT.

A TRIAD supradomain region spans residues 16 to 236; sequence PLVSCKLCLG…YDKGPCRNKL (221 aa). Zn(2+) contacts are provided by cysteine 20, cysteine 23, cysteine 43, cysteine 46, cysteine 111, cysteine 116, cysteine 135, cysteine 138, cysteine 143, cysteine 146, histidine 151, cysteine 156, cysteine 185, and cysteine 188. The RING-type 1 zinc finger occupies 20–70; it reads CKLCLGEYPVEQMTTIAQCQCIFCTLCLKQYVELLIKEGLETAISCPDAAC. An IBR-type zinc finger spans residues 91–156; the sequence is QRYKKLQFER…KASWHPGQGC (66 aa). An RING-type 2; atypical zinc finger spans residues 185–214; the sequence is CPKCKVYIERDEGCAQMMCKNCKHAFCWYC. The active site involves cysteine 198. Residues cysteine 203, cysteine 206, cysteine 211, cysteine 214, histidine 226, and cysteine 232 each contribute to the Zn(2+) site. A helical transmembrane segment spans residues 250–270; sequence VVGIFAGFGLLLLVASPFLLL.

Belongs to the RBR family. RNF144 subfamily. In terms of assembly, self-associates. Interacts with UBE2L3. Auto-ubiquitinated.

It localises to the cell membrane. The protein resides in the cytoplasmic vesicle membrane. The protein localises to the endosome membrane. Its subcellular location is the endoplasmic reticulum membrane. The catalysed reaction is [E2 ubiquitin-conjugating enzyme]-S-ubiquitinyl-L-cysteine + [acceptor protein]-L-lysine = [E2 ubiquitin-conjugating enzyme]-L-cysteine + [acceptor protein]-N(6)-ubiquitinyl-L-lysine.. It participates in protein modification; protein ubiquitination. E3 ubiquitin-protein ligase which accepts ubiquitin from E2 ubiquitin-conjugating enzymes UBE2L3 and UBE2L6 in the form of a thioester and then directly transfers the ubiquitin to targeted substrates. Mediates the ubiquitination and degradation of the DNA damage kinase PRKDC during DNA damage. Positively regulates DNA virus or exogenous cytosolic DNA-triggered innate immune response by mediating STING1 ubiquitination and increasing its 'Lys-6'-linked ubiquitination and translocation from the endoplasmic reticulum to the Golgi leading to downstream signaling pathways. Plays a positive role in EGF-dependent cell proliferation by prolonging EGF/EGFR signaling during EGF stimulation through EGFR ubiquitination. Increases ERK activity independently of EGFR signaling by promoting polyubiquitination and subsequent degradation of VRK3 in the cytosol. The sequence is that of E3 ubiquitin-protein ligase RNF144A (RNF144A) from Homo sapiens (Human).